Reading from the N-terminus, the 531-residue chain is Acetate CoA-transferase YdiF (531 aa).

The active-site 5-glutamyl coenzyme A thioester intermediate is Glu-333.

Belongs to the 3-oxoacid CoA-transferase family. Homotetramer; dimer of dimers.

It catalyses the reaction an acyl-CoA + acetate = a carboxylate + acetyl-CoA. Functionally, coA transferase having broad substrate specificity for short-chain acyl-CoA thioesters with the activity decreasing when the length of the carboxylic acid chain exceeds four carbons. Exhibits high activity with acetoacetyl-CoA, propionyl-CoA, crotonoyl-CoA or butyryl-CoA as donors, with acetate as an acceptor. When acetyl-CoA is used as the donor, propionate, acetoacetate, butyrate, isobutyrate, and 4-hydroxybutyrate can be utilized as acceptors but not isovalerate. May play a role in short-chain fatty acid metabolism in E.coli. In Escherichia coli O157:H7, this protein is Acetate CoA-transferase YdiF.